Reading from the N-terminus, the 209-residue chain is Imidazoleglycerol-phosphate dehydratase (209 aa).

The protein belongs to the imidazoleglycerol-phosphate dehydratase family.

The protein localises to the cytoplasm. The catalysed reaction is D-erythro-1-(imidazol-4-yl)glycerol 3-phosphate = 3-(imidazol-4-yl)-2-oxopropyl phosphate + H2O. The protein operates within amino-acid biosynthesis; L-histidine biosynthesis; L-histidine from 5-phospho-alpha-D-ribose 1-diphosphate: step 6/9. The chain is Imidazoleglycerol-phosphate dehydratase from Nostoc sp. (strain PCC 7120 / SAG 25.82 / UTEX 2576).